The following is a 167-amino-acid chain: Leptin (167 aa).

The signal sequence occupies residues 1-21 (MHCVPLFCFLWFCHHLYYSQA). C117 and C167 are joined by a disulfide.

This sequence belongs to the leptin family.

Its subcellular location is the secreted. Functionally, key player in the regulation of energy balance and body weight control. Once released into the circulation, has central and peripheral effects by binding LEPR, found in many tissues, which results in the activation of several major signaling pathways. In the hypothalamus, acts as an appetite-regulating factor that induces a decrease in food intake and an increase in energy consumption by inducing anorexinogenic factors and suppressing orexigenic neuropeptides, also regulates bone mass and secretion of hypothalamo-pituitary-adrenal hormones. In the periphery, increases basal metabolism, influences reproductive function, regulates pancreatic beta-cell function and insulin secretion, is pro-angiogenic for endothelial cell and affects innate and adaptive immunity. In the arcuate nucleus of the hypothalamus, activates by depolarization POMC neurons inducing FOS and SOCS3 expression to release anorexigenic peptides and inhibits by hyperpolarization NPY neurons inducing SOCS3 with a consequent reduction on release of orexigenic peptides. In addition to its known satiety inducing effect, has a modulatory role in nutrient absorption. In the intestine, reduces glucose absorption by enterocytes by activating PKC and leading to a sequential activation of p38, PI3K and ERK signaling pathways which exerts an inhibitory effect on glucose absorption. Acts as a growth factor on certain tissues, through the activation of different signaling pathways increases expression of genes involved in cell cycle regulation such as CCND1, via JAK2-STAT3 pathway, or VEGFA, via MAPK1/3 and PI3K-AKT1 pathways. May also play an apoptotic role via JAK2-STAT3 pathway and up-regulation of BIRC5 expression. Pro-angiogenic, has mitogenic activity on vascular endothelial cells and plays a role in matrix remodeling by regulating the expression of matrix metalloproteinases (MMPs) and tissue inhibitors of metalloproteinases (TIMPs). In innate immunity, modulates the activity and function of neutrophils by increasing chemotaxis and the secretion of oxygen radicals. Increases phagocytosis by macrophages and enhances secretion of pro-inflammatory mediators. Increases cytotoxic ability of NK cells. Plays a pro-inflammatory role, in synergy with IL1B, by inducing NOS2 which promotes the production of IL6, IL8 and Prostaglandin E2, through a signaling pathway that involves JAK2, PI3K, MAP2K1/MEK1 and MAPK14/p38. In adaptive immunity, promotes the switch of memory T-cells towards T helper-1 cell immune responses. Increases CD4(+)CD25(-) T-cell proliferation and reduces autophagy during TCR (T-cell receptor) stimulation, through MTOR signaling pathway activation and BCL2 up-regulation. This Sminthopsis crassicaudata (Fat-tailed dunnart) protein is Leptin (LEP).